We begin with the raw amino-acid sequence, 112 residues long: ATP synthase subunit c (112 aa).

A run of 2 helical transmembrane segments spans residues 36-56 (FSVL…AIGM) and 81-101 (MFIA…IALI).

Belongs to the ATPase C chain family. As to quaternary structure, F-type ATPases have 2 components, F(1) - the catalytic core - and F(0) - the membrane proton channel. F(1) has five subunits: alpha(3), beta(3), gamma(1), delta(1), epsilon(1). F(0) has three main subunits: a(1), b(2) and c(10-14). The alpha and beta chains form an alternating ring which encloses part of the gamma chain. F(1) is attached to F(0) by a central stalk formed by the gamma and epsilon chains, while a peripheral stalk is formed by the delta and b chains.

It localises to the cell inner membrane. Functionally, f(1)F(0) ATP synthase produces ATP from ADP in the presence of a proton or sodium gradient. F-type ATPases consist of two structural domains, F(1) containing the extramembraneous catalytic core and F(0) containing the membrane proton channel, linked together by a central stalk and a peripheral stalk. During catalysis, ATP synthesis in the catalytic domain of F(1) is coupled via a rotary mechanism of the central stalk subunits to proton translocation. This Campylobacter jejuni subsp. jejuni serotype O:2 (strain ATCC 700819 / NCTC 11168) protein is ATP synthase subunit c.